A 956-amino-acid chain; its full sequence is Glutamate receptor ionotropic, kainate 4 (956 aa).

The first 20 residues, 1–20 (MPRVSAPLVLLPAWLLMVAC), serve as a signal peptide directing secretion. Residues 21-545 (SPHSLRIAAI…YFSFLDPFSP (525 aa)) lie on the Extracellular side of the membrane. N-linked (GlcNAc...) asparagine glycosylation is found at Asn158, Asn220, Asn272, Asn286, Asn323, Asn408, Asn415, and Asn479. L-glutamate is bound by residues Gly500, Thr502, and Arg507. A helical transmembrane segment spans residues 546–566 (GVWLFMLLAYLAVSCVLFLVA). Residues 567–623 (RLTPYEWYSPHPCAQGRCNLLVNQYSLGNSLWFPVGGFMQQGSTIAPRALSTRCVSG) lie on the Cytoplasmic side of the membrane. The helical transmembrane segment at 624–644 (VWWAFTLIIISSYTANLAAFL) threads the bilayer. Residues 645–804 (TVQRMEVPIE…HRAKGLGMEN (160 aa)) are Extracellular-facing. L-glutamate contacts are provided by Ser674, Ser675, and Glu723. An N-linked (GlcNAc...) asparagine glycan is attached at Asn736. The helical transmembrane segment at 805-825 (IGGIFVVLICGLIVAIFMAML) threads the bilayer. The Cytoplasmic portion of the chain corresponds to 826 to 956 (EFLWTLRHSE…DKTTNSSEPE (131 aa)). A disordered region spans residues 931-956 (LRARPSPARSEESLEWDKTTNSSEPE). The segment covering 939 to 948 (RSEESLEWDK) has biased composition (basic and acidic residues).

The protein belongs to the glutamate-gated ion channel (TC 1.A.10.1) family. GRIK4 subfamily. As to quaternary structure, homodimer. Can form functional heteromeric receptors with GRIK1, GRIK2 and GRIK3 subunits. Forms a heteromeric complex with GRIK2. In terms of tissue distribution, expressed in the hippocampus and cerebellum (at protein level).

Its subcellular location is the cell membrane. The protein localises to the postsynaptic cell membrane. It localises to the presynaptic cell membrane. Functionally, ionotropic glutamate receptor that functions as a cation-permeable ligand-gated ion channel. Cannot form functional channels on its own and produces channel activity only in heteromeric assembly with GRIK1, GRIK2 and GRIK3 subunits. The polypeptide is Glutamate receptor ionotropic, kainate 4 (Grik4) (Mus musculus (Mouse)).